A 61-amino-acid chain; its full sequence is Pleurocidin-like peptide WF3 (61 aa).

An N-terminal signal peptide occupies residues 1 to 22 (MKFTATFLVLSLVVLMAEPGEC). Residues 48–61 (YDEQQELNKRAVDE) constitute a propeptide that is removed on maturation.

Belongs to the pleurocidin family.

It localises to the secreted. Its function is as follows. Antimicrobial peptide. This is Pleurocidin-like peptide WF3 (ple3) from Pseudopleuronectes americanus (Winter flounder).